The following is a 275-amino-acid chain: Ribosomal RNA small subunit methyltransferase A (275 aa).

S-adenosyl-L-methionine contacts are provided by asparagine 19, leucine 21, glycine 46, glutamate 71, aspartate 94, and asparagine 117.

The protein belongs to the class I-like SAM-binding methyltransferase superfamily. rRNA adenine N(6)-methyltransferase family. RsmA subfamily.

Its subcellular location is the cytoplasm. The enzyme catalyses adenosine(1518)/adenosine(1519) in 16S rRNA + 4 S-adenosyl-L-methionine = N(6)-dimethyladenosine(1518)/N(6)-dimethyladenosine(1519) in 16S rRNA + 4 S-adenosyl-L-homocysteine + 4 H(+). Its function is as follows. Specifically dimethylates two adjacent adenosines (A1518 and A1519) in the loop of a conserved hairpin near the 3'-end of 16S rRNA in the 30S particle. May play a critical role in biogenesis of 30S subunits. This is Ribosomal RNA small subunit methyltransferase A from Burkholderia lata (strain ATCC 17760 / DSM 23089 / LMG 22485 / NCIMB 9086 / R18194 / 383).